Consider the following 448-residue polypeptide: NK1 transcription factor-related protein 1 (448 aa).

Over residues 1 to 13 (MSASGPEAPGDIP) the composition is skewed to low complexity. Disordered regions lie at residues 1–80 (MSAS…LRPT), 115–299 (ASAP…PRRA), and 350–397 (KWKK…GAPL). The segment covering 14-30 (ALPPPPQPGSGPAPPAP) has biased composition (pro residues). Low complexity-rich tracts occupy residues 62–79 (PAAP…PLRP) and 115–129 (ASAP…SGRP). Over residues 130–139 (PRAEELERRA) the composition is skewed to basic and acidic residues. Residues 186–203 (SGDEVPDDEDDDEDEAPE) show a composition bias toward acidic residues. Residues 205 to 214 (EAARGAEEAR) are compositionally biased toward basic and acidic residues. Composition is skewed to gly residues over residues 215–227 (GGGG…GSGC) and 259–270 (PPGGAAAPGGAG). Residues 271-280 (TTPQGTATAA) show a composition bias toward low complexity. The homeobox DNA-binding region spans 296–355 (PRRARTAFTYEQLVALENKFKATRYLSVCERLNLALSLSLTETQVKIWFQNRRTKWKKQN). Residues 364–382 (TGGGGGPGPGAGPGTGLPG) are compositionally biased toward gly residues.

Belongs to the NK-1 homeobox family. In terms of tissue distribution, expressed in hemopoietic progenitor cells.

It localises to the nucleus. May be required for the coordinated crosstalk of factors involved in the maintenance of energy homeostasis, possibly by regulating the transcription of specific factors involved in energy balance. The chain is NK1 transcription factor-related protein 1 from Homo sapiens (Human).